The following is a 164-amino-acid chain: UBA-like domain-containing protein 2 (164 aa).

Ser2 carries the post-translational modification N-acetylserine. The segment at 144 to 164 (PPGASQGGAPQKAMAAMDGQR) is disordered.

Belongs to the UBALD family.

This is UBA-like domain-containing protein 2 (Ubald2) from Mus musculus (Mouse).